The following is a 264-amino-acid chain: Glutamate racemase (264 aa).

Substrate-binding positions include 10–11 and 42–43; these read DS and YG. Cys-73 serves as the catalytic Proton donor/acceptor. 74–75 serves as a coordination point for substrate; the sequence is NT. The active-site Proton donor/acceptor is the Cys-183. 184–185 serves as a coordination point for substrate; it reads TH.

This sequence belongs to the aspartate/glutamate racemases family.

It carries out the reaction L-glutamate = D-glutamate. Its pathway is cell wall biogenesis; peptidoglycan biosynthesis. In terms of biological role, provides the (R)-glutamate required for cell wall biosynthesis. This Streptococcus equi subsp. zooepidemicus (strain H70) protein is Glutamate racemase.